The primary structure comprises 160 residues: MSFNHFDEQGQAIMVDVSGKEPTLRTARAQAVVRLRPETLQAILDGRMTKGDVLGVARLAGIAAAKKTPELIPLSHPLAIHHAAVEFATDPETGEIAVTATVRAFERTGVEMEAMVSASVAALTVYDMCKGSDKGITIGQVALLYKEGGKSGVYRREEER.

Residues 74–76 and 112–113 contribute to the substrate site; these read LSH and ME. Aspartate 127 is a catalytic residue.

This sequence belongs to the MoaC family. Homohexamer; trimer of dimers.

It carries out the reaction (8S)-3',8-cyclo-7,8-dihydroguanosine 5'-triphosphate = cyclic pyranopterin phosphate + diphosphate. It functions in the pathway cofactor biosynthesis; molybdopterin biosynthesis. Its function is as follows. Catalyzes the conversion of (8S)-3',8-cyclo-7,8-dihydroguanosine 5'-triphosphate to cyclic pyranopterin monophosphate (cPMP). The sequence is that of Cyclic pyranopterin monophosphate synthase from Geotalea uraniireducens (strain Rf4) (Geobacter uraniireducens).